Here is a 109-residue protein sequence, read N- to C-terminus: Nucleoid-associated protein HI_0442 (109 aa).

Belongs to the YbaB/EbfC family. In terms of assembly, homodimer.

It localises to the cytoplasm. Its subcellular location is the nucleoid. Functionally, binds to DNA and alters its conformation. May be involved in regulation of gene expression, nucleoid organization and DNA protection. This is Nucleoid-associated protein HI_0442 from Haemophilus influenzae (strain ATCC 51907 / DSM 11121 / KW20 / Rd).